Consider the following 174-residue polypeptide: Probable E3 ubiquitin-protein ligase RHA4A (174 aa).

The RING-type; atypical zinc finger occupies 105–147 (CCVCLGEFELKEELVEMPLCKHIFHLDCIHLWLYSHNTCPLCR). The tract at residues 155 to 174 (TKTSVDDDNDHPDSPQTSPV) is disordered.

In terms of tissue distribution, expressed in stems, flowers, cauline leaves and roots.

The enzyme catalyses S-ubiquitinyl-[E2 ubiquitin-conjugating enzyme]-L-cysteine + [acceptor protein]-L-lysine = [E2 ubiquitin-conjugating enzyme]-L-cysteine + N(6)-ubiquitinyl-[acceptor protein]-L-lysine.. It participates in protein modification; protein ubiquitination. Probable E3 ubiquitin-protein ligase that may possess E3 ubiquitin ligase activity in vitro. The sequence is that of Probable E3 ubiquitin-protein ligase RHA4A from Arabidopsis thaliana (Mouse-ear cress).